The sequence spans 65 residues: Trypsin inhibitor 1 (65 aa).

Disulfide bonds link Cys-39/Cys-56, Cys-46/Cys-58, and Cys-52/Cys-64.

This sequence belongs to the protease inhibitor I7 (squash-type serine protease inhibitor) family.

It localises to the secreted. Inhibits trypsin. This chain is Trypsin inhibitor 1, found in Trichosanthes kirilowii (Chinese snake gourd).